The primary structure comprises 1196 residues: DNA polymerase beta (1196 aa).

The protein belongs to the DNA polymerase type-B family.

The catalysed reaction is DNA(n) + a 2'-deoxyribonucleoside 5'-triphosphate = DNA(n+1) + diphosphate. Functionally, DNA-directed DNA polymerase involved in viral DNA replication. The polypeptide is DNA polymerase beta (African swine fever virus (isolate Pig/Kenya/KEN-50/1950) (ASFV)).